Reading from the N-terminus, the 118-residue chain is Ribosome-binding factor A (118 aa).

This sequence belongs to the RbfA family. As to quaternary structure, monomer. Binds 30S ribosomal subunits, but not 50S ribosomal subunits or 70S ribosomes.

Its subcellular location is the cytoplasm. One of several proteins that assist in the late maturation steps of the functional core of the 30S ribosomal subunit. Associates with free 30S ribosomal subunits (but not with 30S subunits that are part of 70S ribosomes or polysomes). Required for efficient processing of 16S rRNA. May interact with the 5'-terminal helix region of 16S rRNA. This Geobacter sulfurreducens (strain ATCC 51573 / DSM 12127 / PCA) protein is Ribosome-binding factor A.